The chain runs to 530 residues: MLVSSNVTMQFGSKPLFENISVKFGGGNRYGLIGANGSGKSTFMKILGGDLEPTLGNVSLDPNERIGKLRQDQFAFEEFTVLDTVIMGHKELWEVKQERDRIYALPEMSEEDGYKVADLEVKYGEMDGYSAEARAGELLLGVGIPVEQHYGPMSEVAPGWKLRVLLAQALFADPDILLLDEPTNNLDIDTIRWLEQVLNERDSTMIIISHDRHFLNMVCTHMADLDYGELRVYPGNYDEYMTAATQARERLLADNAKKKAQIAELQSFVSRFSANASKSRQATSRARQIDKIKLEEVKASSRQNPFIRFEQDKKLFRNALEVEGLTKGFDNGPLFKNLNLLLEVGEKLAVLGTNGVGKSTLLKTLVGDLQPDSGTVKWSENARIGYYAQDHEYEFENDLTVFEWMSQWKQEGDDEQAVRSILGRLLFSQDDIKKPAKVLSGGEKGRMLFGKLMMQKPNILIMDEPTNHLDMESIESLNMALELYQGTLIFVSHDREFVSSLATRILEITPERVIDFSGNYEDYLRSKGIE.

ABC transporter domains are found at residues 2-252 (LVSS…ERLL) and 320-526 (LEVE…YLRS). ATP-binding positions include 34–41 (GANGSGKS) and 352–359 (GTNGVGKS).

Belongs to the ABC transporter superfamily. ABCF family. YbiT subfamily.

The sequence is that of Probable ATP-binding protein YbiT (ybiT) from Escherichia coli O157:H7.